Reading from the N-terminus, the 179-residue chain is Large ribosomal subunit protein uL5 (179 aa).

This sequence belongs to the universal ribosomal protein uL5 family. Part of the 50S ribosomal subunit; part of the 5S rRNA/L5/L18/L25 subcomplex. Contacts the 5S rRNA and the P site tRNA. Forms a bridge to the 30S subunit in the 70S ribosome.

Its function is as follows. This is one of the proteins that bind and probably mediate the attachment of the 5S RNA into the large ribosomal subunit, where it forms part of the central protuberance. In the 70S ribosome it contacts protein S13 of the 30S subunit (bridge B1b), connecting the 2 subunits; this bridge is implicated in subunit movement. Contacts the P site tRNA; the 5S rRNA and some of its associated proteins might help stabilize positioning of ribosome-bound tRNAs. The chain is Large ribosomal subunit protein uL5 from Cellvibrio japonicus (strain Ueda107) (Pseudomonas fluorescens subsp. cellulosa).